Consider the following 213-residue polypeptide: RNA pyrophosphohydrolase (213 aa).

The Nudix hydrolase domain occupies Gly6–Thr149. Positions Gly38–Gly59 match the Nudix box motif. A disordered region spans residues Asn185–Thr213.

It belongs to the Nudix hydrolase family. RppH subfamily. It depends on a divalent metal cation as a cofactor.

Functionally, accelerates the degradation of transcripts by removing pyrophosphate from the 5'-end of triphosphorylated RNA, leading to a more labile monophosphorylated state that can stimulate subsequent ribonuclease cleavage. The polypeptide is RNA pyrophosphohydrolase (Albidiferax ferrireducens (strain ATCC BAA-621 / DSM 15236 / T118) (Rhodoferax ferrireducens)).